We begin with the raw amino-acid sequence, 456 residues long: N(6)-adenosine-methyltransferase non-catalytic subunit METTL14 (456 aa).

The span at 39-51 shows a compositional bias: basic and acidic residues; that stretch reads DEQREIAETRETS. Residues 39–74 form a disordered region; sequence DEQREIAETRETSRASYDTSATVSKRKMPEEGEADE. Residues 52 to 61 are compositionally biased toward polar residues; it reads RASYDTSATV. Interaction with METTL3 regions lie at residues 135 to 136 and 237 to 238; these read RD and SG. A positively charged region required for RNA-binding region spans residues 245–254; that stretch reads RMCLRKWGFR. Interaction with METTL3 regions lie at residues 255–258 and 278–287; these read RSED and KAIFQRTKEH. A positively charged region required for RNA-binding region spans residues 297 to 298; that stretch reads HR. Residues 308–312 are interaction with METTL3; sequence NVDID. The interval 395–456 is disordered; it reads LRPKTPPPKS…GPHRGVFAPR (62 aa). Positions 410–421 are enriched in gly residues; sequence ASRGGGRGGPSA. Residues 423–441 are compositionally biased toward basic and acidic residues; that stretch reads RGERGRERNRGSFRGDRGN.

The protein belongs to the MT-A70-like family. In terms of assembly, heterodimer; heterodimerizes with mettl3 to form an antiparallel heterodimer that constitutes an active methyltransferase. Component of the WMM complex, a N6-methyltransferase complex composed of a catalytic subcomplex, named MAC, and of an associated subcomplex, named MACOM. The MAC subcomplex is composed of mettl3 and mettl14.

The protein localises to the nucleus. In terms of biological role, the METTL3-METTL14 heterodimer forms a N6-methyltransferase complex that methylates adenosine residues at the N(6) position of some mRNAs and regulates the circadian clock, differentiation of embryonic stem cells and cortical neurogenesis. In the heterodimer formed with mettl3, mettl14 constitutes the RNA-binding scaffold that recognizes the substrate rather than the catalytic core. N6-methyladenosine (m6A), which takes place at the 5'-[AG]GAC-3' consensus sites of some mRNAs, plays a role in mRNA stability and processing. The sequence is that of N(6)-adenosine-methyltransferase non-catalytic subunit METTL14 (mettl14) from Xenopus tropicalis (Western clawed frog).